The chain runs to 494 residues: Homeotic protein bicoid (494 aa).

3 disordered regions span residues 1–49 (MAQP…PPQF), 149–210 (RRRH…TAHM), and 263–293 (QQVHNHQQQLHHQGNHVPHQMQQQQQQAQQQ). Positions 14-40 (PLPHTHTHPHPHSHPHPHSHPHPHHQH) are enriched in basic residues. The homeobox DNA-binding region spans 97 to 156 (PRRTRTTFTSSQIAELEQHFLQGRYLTAPRLADLSAKLALGTAQVKIWFKNRRRRHKIQS). The segment covering 154-163 (IQSDQHKDQS) has biased composition (basic and acidic residues). The tract at residues 433-440 (RGAAFAKF) is RNA-binding.

It belongs to the paired homeobox family. Bicoid subfamily. As to quaternary structure, interacts with Bin1; in vitro and yeast cells. Interacts with bin3. Maternal expression is an anterior cap concentrated in the cortical cytoplasm. Its transcript is produced maternally and sequestered near the anterior pole of the mature oocyte. After egg deposition, it is translated into protein, which diffuses toward the posterior, forming a long-range anterior gradient.

The protein resides in the nucleus. Functionally, segment polarity transcription factor that provides positional cues for the development of head and thoracic segments. Forms a protein concentration gradient that patterns the anterior-posterior axis during embryogenesis and promotes the expression of anterior gap genes, such as hunchback (hb), ocelliless (oc), and buttonhead (btd). Binds to regulatory DNA sequences containing a 5'-TAATCC-3' sequence motif. Also binds RNA. Interacts with Bin1 to repress transcription of bicoid target genes in the anterior tip of the embryo; a process known as retraction. The protein is Homeotic protein bicoid of Drosophila melanogaster (Fruit fly).